The following is a 344-amino-acid chain: Membrane progestin receptor delta (344 aa).

The Cytoplasmic segment spans residues 1–51; sequence MLSLKLPQLLQVHQVPRVFWEDGIMSGYRRPTSSALDCVLSSFQMTNETVN. The helical transmembrane segment at 52 to 72 threads the bilayer; sequence IWTHFLPTWYFLWRLLALAGG. At 73–83 the chain is on the extracellular side; sequence PGFRAEPYHWP. The chain crosses the membrane as a helical span at residues 84–104; sequence LLVFLLPACLYPFASCCAHTF. Residues 105–113 are Cytoplasmic-facing; it reads SSMSPRMRH. Residues 114–134 form a helical membrane-spanning segment; sequence ICYFLDYGALSLYSLGCAFPY. The Extracellular segment spans residues 135–147; sequence AAYSMPASWLHGH. Residues 148–168 form a helical membrane-spanning segment; it reads LHQFFVPAAALNSFLCTGLSC. Topologically, residues 169–217 are cytoplasmic; the sequence is YSRFLELESPGLSKVLRTGAFAYPFLFDNLPLFYRLGLCWGRGHGCGQE. Residues 218–238 traverse the membrane as a helical segment; that stretch reads ALSTSHGYHLFCALLTGFLFA. The Extracellular portion of the chain corresponds to 239 to 258; that stretch reads SHLPERLAPGRFDYIGHSHQ. The chain crosses the membrane as a helical span at residues 259–279; that stretch reads LFHICAVLGTHFQLEAVLADM. At 280–292 the chain is on the cytoplasmic side; sequence GSRRAWLATQEPA. The chain crosses the membrane as a helical span at residues 293–313; sequence LGLAGTVATLVLAAAGNLLII. The Extracellular segment spans residues 314-344; sequence AAFTATLLRAPSTCPLLQGGPLEGGTQAKQQ.

This sequence belongs to the ADIPOR family. In terms of assembly, homodimer. As to expression, brain specific. Highly expressed in the hypothalamus, also expressed in forebrain, amygdala, corpus callosum and spinal cord.

It is found in the cell membrane. Its function is as follows. Plasma membrane progesterone (P4) receptor coupled to G proteins. Seems to act through a G(s) mediated pathway. Involved in neurosteroid inhibition of apoptosis. May be involved in regulating rapid P4 signaling in the nervous system. Also binds dehydroepiandrosterone (DHEA), pregnanolone, pregnenolone and allopregnanolone. This Homo sapiens (Human) protein is Membrane progestin receptor delta.